A 352-amino-acid polypeptide reads, in one-letter code: NAD(P)H oxidoreductase RTN4IP1, mitochondrial (352 aa).

The region spanning 11–348 (ESLDLLEYKT…NSNSNGKIII (338 aa)) is the Enoyl reductase (ER) domain. NADPH is bound by residues Val-165, Tyr-206, Ala-296, and Phe-298.

It belongs to the zinc-containing alcohol dehydrogenase family. Quinone oxidoreductase subfamily.

The protein localises to the mitochondrion matrix. The enzyme catalyses a quinone + NADH + H(+) = a quinol + NAD(+). The catalysed reaction is a quinone + NADPH + H(+) = a quinol + NADP(+). It functions in the pathway cofactor biosynthesis; ubiquinone biosynthesis. Its function is as follows. NAD(P)H oxidoreductase involved in the ubiquinone biosynthetic pathway. Required for the O-methyltransferase activity of coq3. In Dictyostelium discoideum (Social amoeba), this protein is NAD(P)H oxidoreductase RTN4IP1, mitochondrial (rtn4ip1).